The primary structure comprises 393 residues: Telomeric repeat-binding factor 2-interacting protein 1 (393 aa).

The residue at position 2 (Ala-2) is an N-acetylalanine. 2 positions are modified to phosphoserine: Ser-36 and Ser-43. One can recognise a BRCT domain in the interval 78–101 (FISTQYILDCVDRNEKLDLEAYRL). The segment at 104 to 132 (TEQASDPKPGASTEGSTEPEPQPLTGRIA) is disordered. Residue Lys-111 forms a Glycyl lysine isopeptide (Lys-Gly) (interchain with G-Cter in SUMO2) linkage. Positions 125–185 (QPLTGRIAYT…SLKDRYLKHL (61 aa)) constitute a Myb-like domain. 2 positions are modified to phosphoserine: Ser-151 and Ser-153. Residue Lys-191 forms a Glycyl lysine isopeptide (Lys-Gly) (interchain with G-Cter in SUMO2) linkage. The segment at 193 to 304 (LLGNAPVSPS…EEEPKVSTQE (112 aa)) is disordered. Phosphoserine is present on residues Ser-200 and Ser-203. Residues Lys-205, Lys-209, and Lys-237 each participate in a glycyl lysine isopeptide (Lys-Gly) (interchain with G-Cter in SUMO2) cross-link. Residues 223-252 (QNKRAPDLPEEECVKGEIKENGEADNKLFE) show a composition bias toward basic and acidic residues. Acidic residues predominate over residues 282 to 297 (TPEEDSETQPDEEEEE). Residue Lys-366 forms a Glycyl lysine isopeptide (Lys-Gly) (interchain with G-Cter in SUMO2) linkage. Residues 377-393 (KKFGAQNVARRIEFRKK) carry the Nuclear localization signal motif.

Belongs to the RAP1 family. Homodimer. Component of the shelterin complex (telosome) composed of TERF1, TERF2, TINF2, TERF2IP ACD and POT1. Binds to TERF2 (but not TERF1) with its C-terminus. Interacts with SLX4/BTBD12. Interacts with TERF2; the interaction is direct. Does not interact with TERF1. Associates with the I-kappa-B-kinase (IKK) core complex, composed of CHUK, IKBKB and IKBKG.

It localises to the nucleus. The protein localises to the cytoplasm. The protein resides in the chromosome. It is found in the telomere. Acts both as a regulator of telomere function and as a transcription regulator. Involved in the regulation of telomere length and protection as a component of the shelterin complex (telosome). In contrast to other components of the shelterin complex, it is dispensible for telomere capping and does not participate in the protection of telomeres against non-homologous end-joining (NHEJ)-mediated repair. Instead, it is required to negatively regulate telomere recombination and is essential for repressing homology-directed repair (HDR), which can affect telomere length. Does not bind DNA directly: recruited to telomeric double-stranded 5'-TTAGGG-3' repeats via its interaction with TERF2. Independently of its function in telomeres, also acts as a transcription regulator: recruited to extratelomeric 5'-TTAGGG-3' sites via its association with TERF2 or other factors, and regulates gene expression. When cytoplasmic, associates with the I-kappa-B-kinase (IKK) complex and acts as a regulator of the NF-kappa-B signaling by promoting IKK-mediated phosphorylation of RELA/p65, leading to activate expression of NF-kappa-B target genes. This is Telomeric repeat-binding factor 2-interacting protein 1 (Terf2ip) from Mus musculus (Mouse).